A 110-amino-acid chain; its full sequence is Phosphoribosyl-ATP pyrophosphatase (110 aa).

The protein belongs to the PRA-PH family.

The protein localises to the cytoplasm. It carries out the reaction 1-(5-phospho-beta-D-ribosyl)-ATP + H2O = 1-(5-phospho-beta-D-ribosyl)-5'-AMP + diphosphate + H(+). It functions in the pathway amino-acid biosynthesis; L-histidine biosynthesis; L-histidine from 5-phospho-alpha-D-ribose 1-diphosphate: step 2/9. This chain is Phosphoribosyl-ATP pyrophosphatase, found in Pseudomonas fluorescens (strain ATCC BAA-477 / NRRL B-23932 / Pf-5).